A 197-amino-acid polypeptide reads, in one-letter code: Imidazoleglycerol-phosphate dehydratase (197 aa).

The protein belongs to the imidazoleglycerol-phosphate dehydratase family.

The protein resides in the cytoplasm. It catalyses the reaction D-erythro-1-(imidazol-4-yl)glycerol 3-phosphate = 3-(imidazol-4-yl)-2-oxopropyl phosphate + H2O. Its pathway is amino-acid biosynthesis; L-histidine biosynthesis; L-histidine from 5-phospho-alpha-D-ribose 1-diphosphate: step 6/9. The protein is Imidazoleglycerol-phosphate dehydratase of Azorhizobium caulinodans (strain ATCC 43989 / DSM 5975 / JCM 20966 / LMG 6465 / NBRC 14845 / NCIMB 13405 / ORS 571).